Reading from the N-terminus, the 363-residue chain is uncharacterized protein (363 aa).

Positions 109-329 (RAALRELRSR…VEELQAQTRE (221 aa)) form a coiled coil.

This is an uncharacterized protein from Homo sapiens (Human).